Here is a 565-residue protein sequence, read N- to C-terminus: Oxygen-dependent choline dehydrogenase (565 aa).

6 to 35 (DYIIIGAGSAGNVLATRLTEDADVSVLLLE) is a binding site for FAD. The active-site Proton acceptor is the His-475. The interval 541–565 (RSNAPYFVAGERPVRGQPQRAVSAA) is disordered.

The protein belongs to the GMC oxidoreductase family. The cofactor is FAD.

The catalysed reaction is choline + A = betaine aldehyde + AH2. The enzyme catalyses betaine aldehyde + NAD(+) + H2O = glycine betaine + NADH + 2 H(+). Its pathway is amine and polyamine biosynthesis; betaine biosynthesis via choline pathway; betaine aldehyde from choline (cytochrome c reductase route): step 1/1. Involved in the biosynthesis of the osmoprotectant glycine betaine. Catalyzes the oxidation of choline to betaine aldehyde and betaine aldehyde to glycine betaine at the same rate. The protein is Oxygen-dependent choline dehydrogenase of Ectopseudomonas mendocina (strain ymp) (Pseudomonas mendocina).